A 361-amino-acid chain; its full sequence is Beta-hexosaminidase (361 aa).

Residues Asp-69, Arg-77, Arg-144, and 174 to 175 (KH) contribute to the substrate site. His-187 functions as the Proton donor/acceptor in the catalytic mechanism. Asp-258 (nucleophile) is an active-site residue.

It belongs to the glycosyl hydrolase 3 family. NagZ subfamily.

The protein localises to the cytoplasm. It catalyses the reaction Hydrolysis of terminal non-reducing N-acetyl-D-hexosamine residues in N-acetyl-beta-D-hexosaminides.. It functions in the pathway cell wall biogenesis; peptidoglycan recycling. Functionally, plays a role in peptidoglycan recycling by cleaving the terminal beta-1,4-linked N-acetylglucosamine (GlcNAc) from peptide-linked peptidoglycan fragments, giving rise to free GlcNAc, anhydro-N-acetylmuramic acid and anhydro-N-acetylmuramic acid-linked peptides. This Neisseria gonorrhoeae (strain ATCC 700825 / FA 1090) protein is Beta-hexosaminidase.